The primary structure comprises 248 residues: Adenosylcobinamide-GDP ribazoletransferase (248 aa).

A run of 8 helical transmembrane segments spans residues 24-44, 47-67, 70-90, 106-126, 134-154, 165-185, 186-206, and 228-248; these read EVNL…IGAW, LVFT…AGLF, IIIT…GLFS, VGAN…ALFL, IGWL…LLFA, LGSI…LFVL, FILG…VILF, and AGGQ…WGLI.

It belongs to the CobS family. It depends on Mg(2+) as a cofactor.

Its subcellular location is the cell membrane. It carries out the reaction alpha-ribazole + adenosylcob(III)inamide-GDP = adenosylcob(III)alamin + GMP + H(+). It catalyses the reaction alpha-ribazole 5'-phosphate + adenosylcob(III)inamide-GDP = adenosylcob(III)alamin 5'-phosphate + GMP + H(+). It participates in cofactor biosynthesis; adenosylcobalamin biosynthesis; adenosylcobalamin from cob(II)yrinate a,c-diamide: step 7/7. Joins adenosylcobinamide-GDP and alpha-ribazole to generate adenosylcobalamin (Ado-cobalamin). Also synthesizes adenosylcobalamin 5'-phosphate from adenosylcobinamide-GDP and alpha-ribazole 5'-phosphate. In Listeria welshimeri serovar 6b (strain ATCC 35897 / DSM 20650 / CCUG 15529 / CIP 8149 / NCTC 11857 / SLCC 5334 / V8), this protein is Adenosylcobinamide-GDP ribazoletransferase.